Consider the following 322-residue polypeptide: Ribonuclease Z (322 aa).

Zn(2+) is bound by residues His-62, His-64, Asp-66, His-67, His-139, Asp-210, and His-268. The active-site Proton acceptor is the Asp-66.

Belongs to the RNase Z family. Homodimer. The cofactor is Zn(2+).

It carries out the reaction Endonucleolytic cleavage of RNA, removing extra 3' nucleotides from tRNA precursor, generating 3' termini of tRNAs. A 3'-hydroxy group is left at the tRNA terminus and a 5'-phosphoryl group is left at the trailer molecule.. Its function is as follows. Zinc phosphodiesterase, which displays some tRNA 3'-processing endonuclease activity. Probably involved in tRNA maturation, by removing a 3'-trailer from precursor tRNA. This is Ribonuclease Z from Nostoc sp. (strain PCC 7120 / SAG 25.82 / UTEX 2576).